A 227-amino-acid chain; its full sequence is Cytochrome c oxidase subunit 2 (227 aa).

Residues 1–14 (MAYPFQLGLQDATS) lie on the Mitochondrial intermembrane side of the membrane. The helical transmembrane segment at 15-45 (PIMEELLHFHDHTLMIVFLISSLVLYIISLM) threads the bilayer. The Mitochondrial matrix segment spans residues 46-59 (LTTKLTHTSTMDAQ). A helical transmembrane segment spans residues 60-87 (EVETVWTILPAIILILIALPSLRILYMM). The Mitochondrial intermembrane segment spans residues 88-227 (DEINNPSLTV…YFETWSALMV (140 aa)). Cu cation is bound by residues His161, Cys196, Glu198, Cys200, His204, and Met207. A Mg(2+)-binding site is contributed by Glu198. Tyr218 carries the post-translational modification Phosphotyrosine.

The protein belongs to the cytochrome c oxidase subunit 2 family. Component of the cytochrome c oxidase (complex IV, CIV), a multisubunit enzyme composed of 14 subunits. The complex is composed of a catalytic core of 3 subunits MT-CO1, MT-CO2 and MT-CO3, encoded in the mitochondrial DNA, and 11 supernumerary subunits COX4I, COX5A, COX5B, COX6A, COX6B, COX6C, COX7A, COX7B, COX7C, COX8 and NDUFA4, which are encoded in the nuclear genome. The complex exists as a monomer or a dimer and forms supercomplexes (SCs) in the inner mitochondrial membrane with NADH-ubiquinone oxidoreductase (complex I, CI) and ubiquinol-cytochrome c oxidoreductase (cytochrome b-c1 complex, complex III, CIII), resulting in different assemblies (supercomplex SCI(1)III(2)IV(1) and megacomplex MCI(2)III(2)IV(2)). Found in a complex with TMEM177, COA6, COX18, COX20, SCO1 and SCO2. Interacts with TMEM177 in a COX20-dependent manner. Interacts with COX20. Interacts with COX16. It depends on Cu cation as a cofactor.

The protein localises to the mitochondrion inner membrane. It carries out the reaction 4 Fe(II)-[cytochrome c] + O2 + 8 H(+)(in) = 4 Fe(III)-[cytochrome c] + 2 H2O + 4 H(+)(out). Component of the cytochrome c oxidase, the last enzyme in the mitochondrial electron transport chain which drives oxidative phosphorylation. The respiratory chain contains 3 multisubunit complexes succinate dehydrogenase (complex II, CII), ubiquinol-cytochrome c oxidoreductase (cytochrome b-c1 complex, complex III, CIII) and cytochrome c oxidase (complex IV, CIV), that cooperate to transfer electrons derived from NADH and succinate to molecular oxygen, creating an electrochemical gradient over the inner membrane that drives transmembrane transport and the ATP synthase. Cytochrome c oxidase is the component of the respiratory chain that catalyzes the reduction of oxygen to water. Electrons originating from reduced cytochrome c in the intermembrane space (IMS) are transferred via the dinuclear copper A center (CU(A)) of subunit 2 and heme A of subunit 1 to the active site in subunit 1, a binuclear center (BNC) formed by heme A3 and copper B (CU(B)). The BNC reduces molecular oxygen to 2 water molecules using 4 electrons from cytochrome c in the IMS and 4 protons from the mitochondrial matrix. The sequence is that of Cytochrome c oxidase subunit 2 (MT-CO2) from Canis mesomelas elongae (Eastern African black-backed jackal).